The primary structure comprises 633 residues: Phosphomethylpyrimidine synthase (633 aa).

Substrate-binding positions include N245, M274, Y303, H339, 359-361, 400-403, and E439; these read SRG and DGLR. H443 provides a ligand contact to Zn(2+). Y466 contributes to the substrate binding site. H507 contributes to the Zn(2+) binding site. Residues C587, C590, and C595 each contribute to the [4Fe-4S] cluster site.

The protein belongs to the ThiC family. In terms of assembly, homodimer. [4Fe-4S] cluster is required as a cofactor.

It catalyses the reaction 5-amino-1-(5-phospho-beta-D-ribosyl)imidazole + S-adenosyl-L-methionine = 4-amino-2-methyl-5-(phosphooxymethyl)pyrimidine + CO + 5'-deoxyadenosine + formate + L-methionine + 3 H(+). It participates in cofactor biosynthesis; thiamine diphosphate biosynthesis. Functionally, catalyzes the synthesis of the hydroxymethylpyrimidine phosphate (HMP-P) moiety of thiamine from aminoimidazole ribotide (AIR) in a radical S-adenosyl-L-methionine (SAM)-dependent reaction. This chain is Phosphomethylpyrimidine synthase, found in Neisseria meningitidis serogroup C / serotype 2a (strain ATCC 700532 / DSM 15464 / FAM18).